The sequence spans 645 residues: Dictomallein-like protein (645 aa).

Positions 1–13 (MKLSMVMVLLVLA) are cleaved as a signal peptide. The tract at residues 19-55 (CGGNDDNNSERTHESGDSNGDVTTPDNDASSNDEDDA) is disordered. The 272-residue stretch at 177–448 (PALHPELDLT…QRWVRNRARM (272 aa)) folds into the Peptidase M66 domain. His-333 lines the Zn(2+) pocket. Residue Glu-334 is part of the active site. Zn(2+) contacts are provided by His-337 and His-343.

The protein belongs to the dictomallein family. Requires Zn(2+) as cofactor.

The protein resides in the secreted. The chain is Dictomallein-like protein (dtmL) from Hahella chejuensis (strain KCTC 2396).